The sequence spans 2371 residues: Reducing polyketide synthase DEP5 (2371 aa).

Positions 47 to 477 (LEPIAVVGMG…GTNAHTIIES (431 aa)) constitute a Ketosynthase family 3 (KS3) domain. Residues Cys-221, His-358, and His-399 each act as for beta-ketoacyl synthase activity in the active site. The segment at 593–905 (VFTGQGAQWA…QYLPTLIRGS (313 aa)) is malonyl-CoA:ACP transacylase (MAT) domain. The active-site For malonyltransferase activity is Ser-685. The interval 982 to 1120 (HDVLGQLTIG…GSIRINTSNK (139 aa)) is N-terminal hotdog fold. Residues 982–1158 (HDVLGQLTIG…FNYGPTFQDM (177 aa)) are dehydratase (DH) domain. The PKS/mFAS DH domain occupies 982-1286 (HDVLGQLTIG…CTAYEAAIPQ (305 aa)). His-1014 functions as the Proton acceptor; for dehydratase activity in the catalytic mechanism. The interval 1132–1286 (PQRASGKLWN…CTAYEAAIPQ (155 aa)) is C-terminal hotdog fold. The active-site Proton donor; for dehydratase activity is the Asp-1195. Residues 1656-1964 (GKVEAGKVVF…QSLSSTETVL (309 aa)) form an enoyl reductase (ER) domain region. The interval 1988–2163 (ATYLLVGCLG…KHACAVVLPM (176 aa)) is ketoreductase (KR) domain. Residues 2286–2364 (SLVRDHFISK…KFAELVCAAQ (79 aa)) form the Carrier domain. Ser-2323 carries the post-translational modification O-(pantetheine 4'-phosphoryl)serine.

The protein operates within polyketide biosynthesis. Its function is as follows. Part of the gene cluster that mediates the biosynthesis of depudecin, a highly oxidized eleven-carbon linear polyketide that acts as a histone deacetylase (HDAC) inhibitor and makes a small contribution to pathogenesis. The reducing polyketide synthase DEP5 is the central enzyme in depudecin biosynthesis by yielding the backbone polyketide chain. The monooxygenases DEP2 and DEP4, as well as the uncharacterized protein DEP1, then act as tailoring enzymes to modify the intermediate polyketide chain into depudecin. The chain is Reducing polyketide synthase DEP5 from Fusarium langsethiae.